A 158-amino-acid chain; its full sequence is MQRYPMTPEGKIALEKELQHLKTVERPRITQAIAEAREHGDLKENAEYHAAREQQGFCEGRIQDIEGKLGTAQVIAVKDLEQNGRVVFGVTVTIENLDTEERNTYKIVGDDEADFKINKISVNSPIALGLLGKKEGDEVKITTPQGEVEYEVVSVEYL.

The protein belongs to the GreA/GreB family.

In terms of biological role, necessary for efficient RNA polymerase transcription elongation past template-encoded arresting sites. The arresting sites in DNA have the property of trapping a certain fraction of elongating RNA polymerases that pass through, resulting in locked ternary complexes. Cleavage of the nascent transcript by cleavage factors such as GreA or GreB allows the resumption of elongation from the new 3'terminus. GreA releases sequences of 2 to 3 nucleotides. The protein is Transcription elongation factor GreA of Acinetobacter baumannii (strain SDF).